Consider the following 303-residue polypeptide: Pycsar effector protein XpPycTIR (303 aa).

Residue 14–138 (LVATLTEHRL…RRIAATLARR (125 aa)) coordinates a nucleoside 3',5'-cyclic phosphate. The TIR-like stretch occupies residues 154–273 (RVFIMSSVEA…DLAGLTTIPY (120 aa)).

It localises to the cytoplasm. The enzyme catalyses NAD(+) + H2O = ADP-D-ribose + nicotinamide + H(+). Pycsar (pyrimidine cyclase system for antiphage resistance) provides immunity against bacteriophage. The pyrimidine cyclase (PycC) synthesizes cyclic nucleotides in response to infection; these serve as specific second messenger signals. The signals activate the adjacent effector, leading to bacterial cell death and abortive phage infection. A clade B Pycsar system. Functionally, the effector gene of a two-gene Pycsar system. Expression of this and adjacent uridylate cyclase XpPycC (AC P0DV28) confers resistance to bacteriophage T7. When cells expressing the Pycsar system are infected by phage T7 at low multiplicity of infection (0.2 MOI) the culture survivey, at 2.0 MOI bacteria enter growth arrest. The same cells enter growth arrest after exposure to 2.5 mM cUMP but not cCMP; the effector protein responds only to the cUMP usually produced by its cognate NTP cyclase. NAD(+) levels in infected cells are depleted between 5 and 10 minutes after infection with T7 at MOI of 2. Probably only responds to cUMP. This Xanthomonas perforans protein is Pycsar effector protein XpPycTIR.